The following is a 252-amino-acid chain: Orotidine 5'-phosphate decarboxylase (252 aa).

Substrate contacts are provided by residues Asp24, Lys46, 73-82 (DLKFHDIPNT), Thr137, Arg199, Gln208, Gly228, and Arg229. Lys75 functions as the Proton donor in the catalytic mechanism.

The protein belongs to the OMP decarboxylase family. Type 1 subfamily. As to quaternary structure, homodimer.

The catalysed reaction is orotidine 5'-phosphate + H(+) = UMP + CO2. It functions in the pathway pyrimidine metabolism; UMP biosynthesis via de novo pathway; UMP from orotate: step 2/2. Functionally, catalyzes the decarboxylation of orotidine 5'-monophosphate (OMP) to uridine 5'-monophosphate (UMP). This is Orotidine 5'-phosphate decarboxylase from Moorella thermoacetica (strain ATCC 39073 / JCM 9320).